The sequence spans 483 residues: Cyclic AMP-dependent transcription factor ATF-7 (483 aa).

The segment at 1–285 is transactivation domain; that stretch reads MGDDRPFVCN…GMVVGSASTM (285 aa). A C2H2-type zinc finger spans residues 7-31; sequence FVCNAPGCGQRFTNEDHLAVHKHKH. Phosphothreonine; by MAPK11 is present on Thr-51. Phosphothreonine occurs at positions 53 and 101. A Glycyl lysine isopeptide (Lys-Gly) (interchain with G-Cter in SUMO1) cross-link involves residue Lys-107. 2 disordered regions span residues 110–148 and 299–345; these read EPVE…TPTP and HPDA…NRAA. 2 stretches are compositionally biased toward low complexity: residues 114-126 and 307-320; these read VDSS…ASSP and QPQV…PSTG. Over residues 326-343 the composition is skewed to basic and acidic residues; sequence TVDEDPDERRQRFLERNR. The 64-residue stretch at 332 to 395 folds into the bZIP domain; sequence DERRQRFLER…AQLKQLLLAH (64 aa). The segment at 334–354 is basic motif; the sequence is RRQRFLERNRAAASRCRQKRK. Positions 360-388 are leucine-zipper; sequence LEKKAEELTSQNIQLSNEVTLLRNEVAQL. 2 disordered regions span residues 407 to 440 and 464 to 483; these read TQGY…SNGL and LSMP…SAGR. Phosphoserine occurs at positions 413 and 423. Residues 429-440 show a composition bias toward polar residues; sequence QHSSATAPSNGL.

The protein belongs to the bZIP family. As to quaternary structure, homodimer; binds DNA as homodimer. Heterodimer; heterodimerizes with other members of ATF family and with JUN family members. Interacts with JNK2; the interaction does not phosphorylate ATF7 but acts as a docking site for other ATF-associated partners such as JUN family members. Interacts (via its transactivation domain) with TAF12 (isoforms TAFII15 and TAFII20); the interaction potentiates the transactivation activity (isoform TAFII20 only) and is inhibited by ATF7 sumoylation. Interacts with TAF4; the interaction inhibits the TAF12-dependent transactivation. Interacts with MAPK9; the interaction does not phosphorylate ATF7 but acts as a docking site for ATF7-associated partners such as JUN. Interacts with Ku complex components XRCC6 and XRCC7. Interacts with TERT. In terms of processing, on EGF stimulation, phosphorylated first on Thr-53 allowing subsequent phosphorylation on Thr-51. This latter phosphorylation prevents sumoylation, increases binding to TAF12 and enhances transcriptional activity. Social isolation stress as well as TNF-alpha also induce the phosphorylation of ATF7. Phosphorylated in proliferating colonic and small intestinal epithelial cells. Sumoylation delays nuclear localization and inhibits transactivation activity through preventing binding to TAF12. RANBP2 appears to be the specific E3 ligase.

The protein resides in the nucleus. It localises to the nucleoplasm. Its subcellular location is the chromosome. It is found in the telomere. Stress-responsive chromatin regulator that plays a role in various biological processes including innate immunological memory, adipocyte differentiation or telomerase regulation. In absence of stress, contributes to the formation of heterochromatin and heterochromatin-like structure by recruiting histone H3K9 tri- and di-methyltransferases thus silencing the transcription of target genes such as STAT1 in adipocytes, or genes involved in innate immunity in macrophages and adipocytes. Stress induces ATF7 phosphorylation that disrupts interactions with histone methyltransferase and enhances the association with coactivators containing histone acetyltransferase and/or histone demethylase, leading to disruption of the heterochromatin-like structure and subsequently transcriptional activation. In response to TNF-alpha, which is induced by various stresses, phosphorylated ATF7 and telomerase are released from telomeres leading to telomere shortening. Plays also a role in maintaining epithelial regenerative capacity and protecting against cell death during intestinal epithelial damage and repair. The sequence is that of Cyclic AMP-dependent transcription factor ATF-7 (ATF7) from Pongo abelii (Sumatran orangutan).